A 200-amino-acid polypeptide reads, in one-letter code: 3-isopropylmalate dehydratase small subunit (200 aa).

It belongs to the LeuD family. LeuD type 1 subfamily. As to quaternary structure, heterodimer of LeuC and LeuD.

The enzyme catalyses (2R,3S)-3-isopropylmalate = (2S)-2-isopropylmalate. It functions in the pathway amino-acid biosynthesis; L-leucine biosynthesis; L-leucine from 3-methyl-2-oxobutanoate: step 2/4. Catalyzes the isomerization between 2-isopropylmalate and 3-isopropylmalate, via the formation of 2-isopropylmaleate. The chain is 3-isopropylmalate dehydratase small subunit from Vibrio atlanticus (strain LGP32) (Vibrio splendidus (strain Mel32)).